A 382-amino-acid chain; its full sequence is Neuropeptide Y receptor type 1 (382 aa).

Over 1-33 (MNSTLFSRVENYSVHYNVSENSPFLAFENDDCH) the chain is Extracellular. N2, N11, and N17 each carry an N-linked (GlcNAc...) asparagine glycan. The helical transmembrane segment at 34 to 54 (LPLAVIFTLALAYGAVIILGV) threads the bilayer. Topologically, residues 55–75 (SGNLALIIIILKQKEMRNVTN) are cytoplasmic. A helical membrane pass occupies residues 76–96 (ILIVNLSFSDLLVAVMCLPFT). Residues 97-115 (FVYTLMDHWVFGETMCKLN) are Extracellular-facing. Cysteines 112 and 197 form a disulfide. A helical transmembrane segment spans residues 116–136 (PFVQCVSITVSIFSLVLIAVE). The Cytoplasmic portion of the chain corresponds to 137–153 (RHQLIINPRGWRPNNRH). The helical transmembrane segment at 154-174 (AYIGITVIWVLAVASSLPFVI) threads the bilayer. Residues 175 to 210 (YQILTDEPFQNVSLAAFKDKYVCFDKFPSDSHRLSY) lie on the Extracellular side of the membrane. Residues 211–231 (TTLLLVLQYFGPLCFIFICYF) traverse the membrane as a helical segment. The Cytoplasmic portion of the chain corresponds to 232–259 (KIYIRLKRRNNMMDKIRDSKYRSSETKR). The chain crosses the membrane as a helical span at residues 260–280 (INVMLLSIVVAFAVCWLPLTI). Residues 281–298 (FNTVFDWNHQIIATCNHN) are Extracellular-facing. Residues 299–319 (LLFLLCHLTAMISTCVNPIFY) form a helical membrane-spanning segment. Over 320 to 382 (GFLNKNFQRD…KISMNDNEKI (63 aa)) the chain is Cytoplasmic. C337 carries the S-palmitoyl cysteine lipid modification. 2 positions are modified to phosphoserine: S367 and S375.

The protein belongs to the G-protein coupled receptor 1 family. Brain.

The protein localises to the cell membrane. In terms of biological role, receptor for neuropeptide Y and peptide YY. This is Neuropeptide Y receptor type 1 (Npy1r) from Rattus norvegicus (Rat).